We begin with the raw amino-acid sequence, 186 residues long: Single-stranded DNA-binding protein 1 (186 aa).

The 108-residue stretch at Met-1–Leu-108 folds into the SSB domain. Positions Gln-120–Phe-186 are disordered. A compositionally biased stretch (polar residues) spans Asp-132–Ser-141. Residues Ser-175–Phe-186 show a composition bias toward acidic residues.

In terms of assembly, homotetramer.

In Tropheryma whipplei (strain TW08/27) (Whipple's bacillus), this protein is Single-stranded DNA-binding protein 1 (ssb1).